Consider the following 686-residue polypeptide: Glycine--tRNA ligase beta subunit (686 aa).

It belongs to the class-II aminoacyl-tRNA synthetase family. As to quaternary structure, tetramer of two alpha and two beta subunits.

The protein resides in the cytoplasm. The enzyme catalyses tRNA(Gly) + glycine + ATP = glycyl-tRNA(Gly) + AMP + diphosphate. The protein is Glycine--tRNA ligase beta subunit of Halothermothrix orenii (strain H 168 / OCM 544 / DSM 9562).